The chain runs to 61 residues: Large ribosomal subunit protein eL37 (61 aa).

Residues Cys-19, Cys-22, Cys-34, and Cys-37 each coordinate Zn(2+). The segment at 19–37 (CRRCGRNSFNARKGYCAAC) adopts a C4-type zinc-finger fold.

It belongs to the eukaryotic ribosomal protein eL37 family. The cofactor is Zn(2+).

Functionally, binds to the 23S rRNA. This chain is Large ribosomal subunit protein eL37, found in Sulfolobus acidocaldarius (strain ATCC 33909 / DSM 639 / JCM 8929 / NBRC 15157 / NCIMB 11770).